Here is a 478-residue protein sequence, read N- to C-terminus: Serine carboxypeptidase-like 33 (478 aa).

Positions 1 to 33 are cleaved as a signal peptide; the sequence is MNLTLPMKKQKFLLIISLLILLSLLHQDYHIEA. 3 disulfides stabilise this stretch: Cys-95–Cys-361, Cys-257–Cys-268, and Cys-292–Cys-330. N-linked (GlcNAc...) asparagine glycans are attached at residues Asn-114 and Asn-146. Ser-188 is an active-site residue. Residues Asn-263, Asn-295, and Asn-362 are each glycosylated (N-linked (GlcNAc...) asparagine). Catalysis depends on residues Asp-398 and His-451.

It belongs to the peptidase S10 family. In terms of tissue distribution, expressed in senescent leaves and flowers.

Its subcellular location is the secreted. Functionally, probable carboxypeptidase. The protein is Serine carboxypeptidase-like 33 (SCPL33) of Arabidopsis thaliana (Mouse-ear cress).